The chain runs to 436 residues: 3-ketoacyl-CoA thiolase (436 aa).

The active-site Acyl-thioester intermediate is the C99. Active-site proton acceptor residues include H392 and C422.

Belongs to the thiolase-like superfamily. Thiolase family. Heterotetramer of two alpha chains (FadJ) and two beta chains (FadI).

It is found in the cytoplasm. The enzyme catalyses an acyl-CoA + acetyl-CoA = a 3-oxoacyl-CoA + CoA. Its pathway is lipid metabolism; fatty acid beta-oxidation. Catalyzes the final step of fatty acid oxidation in which acetyl-CoA is released and the CoA ester of a fatty acid two carbons shorter is formed. This is 3-ketoacyl-CoA thiolase from Shewanella baltica (strain OS155 / ATCC BAA-1091).